Here is a 76-residue protein sequence, read N- to C-terminus: NADH-ubiquinone oxidoreductase chain 4L (76 aa).

The next 3 helical transmembrane spans lie at 1 to 21 (MTPVHFSFTSAFILGLMGLAF), 29 to 49 (ALLCLEGMMLSLFIALSLWAL), and 56 to 76 (YSVAPMLLLAFSACEASAGLA).

This sequence belongs to the complex I subunit 4L family.

Its subcellular location is the mitochondrion membrane. It catalyses the reaction a ubiquinone + NADH + 5 H(+)(in) = a ubiquinol + NAD(+) + 4 H(+)(out). In terms of biological role, core subunit of the mitochondrial membrane respiratory chain NADH dehydrogenase (Complex I) which catalyzes electron transfer from NADH through the respiratory chain, using ubiquinone as an electron acceptor. Part of the enzyme membrane arm which is embedded in the lipid bilayer and involved in proton translocation. The protein is NADH-ubiquinone oxidoreductase chain 4L (MT-ND4L) of Oncorhynchus masou (Cherry salmon).